The sequence spans 338 residues: MIRVGINGYGTIGRRVANAVSSQDDMIVVGIVKTKPDYISEVASRRFKIFVPDSSYMKAFQDAGIKVEGTLDNLLDDAEIIVDATPEGMGEKNKPLYIKKKAKAIFEGGEEPDVAETSFNAYSNYNDAIGKSYVRVVSCNTTGLARTLYPIQQAFGVKHVEATLIRRATDQNDSSKGPINAVEPSLKIPSHHAPDLKTVMGNIDVNTVAIKVPTTLMHVHVVQVDTEKNASNDGVLEAWNNYRRIIHVKKDDGIKSTAQIMDLAREFGRDRSDLYEIAIWEGSVSAKANRISYIQAVHQESDVIPENVDAIRAMFNLADKEKSIEKTDKSLGIEKRVY.

NAD(+) is bound by residues 11 to 12 and Gly-109; that span reads TI. Residue 138 to 140 participates in D-glyceraldehyde 3-phosphate binding; sequence SCN. Cys-139 serves as the catalytic Nucleophile. Arg-167 contributes to the NAD(+) binding site. Residues Thr-169 and 192-193 each bind D-glyceraldehyde 3-phosphate; that span reads HA. NAD(+) is bound at residue Gln-299.

This sequence belongs to the glyceraldehyde-3-phosphate dehydrogenase family. In terms of assembly, homotetramer.

The protein resides in the cytoplasm. It catalyses the reaction D-glyceraldehyde 3-phosphate + phosphate + NADP(+) = (2R)-3-phospho-glyceroyl phosphate + NADPH + H(+). The enzyme catalyses D-glyceraldehyde 3-phosphate + phosphate + NAD(+) = (2R)-3-phospho-glyceroyl phosphate + NADH + H(+). It participates in carbohydrate degradation; glycolysis; pyruvate from D-glyceraldehyde 3-phosphate: step 1/5. The protein is Glyceraldehyde-3-phosphate dehydrogenase of Thermoplasma volcanium (strain ATCC 51530 / DSM 4299 / JCM 9571 / NBRC 15438 / GSS1).